Consider the following 353-residue polypeptide: Putative glycosyltransferase TagX (353 aa).

This sequence belongs to the glycosyltransferase 2 family.

This chain is Putative glycosyltransferase TagX (tagX), found in Staphylococcus aureus (strain Mu50 / ATCC 700699).